The following is a 387-amino-acid chain: S-adenosylmethionine synthase (387 aa).

His17 contacts ATP. Asp19 is a binding site for Mg(2+). Position 45 (Glu45) interacts with K(+). Glu58 and Gln101 together coordinate L-methionine. The tract at residues 101–111 is flexible loop; the sequence is QSPDIAQGVDR. ATP contacts are provided by residues 168–170, 234–235, Asp243, 249–250, Ala266, and Lys270; these read DAK, RF, and RK. Asp243 contributes to the L-methionine binding site. Position 274 (Lys274) interacts with L-methionine.

This sequence belongs to the AdoMet synthase family. In terms of assembly, homotetramer; dimer of dimers. Requires Mg(2+) as cofactor. It depends on K(+) as a cofactor.

Its subcellular location is the cytoplasm. It carries out the reaction L-methionine + ATP + H2O = S-adenosyl-L-methionine + phosphate + diphosphate. It participates in amino-acid biosynthesis; S-adenosyl-L-methionine biosynthesis; S-adenosyl-L-methionine from L-methionine: step 1/1. Functionally, catalyzes the formation of S-adenosylmethionine (AdoMet) from methionine and ATP. The overall synthetic reaction is composed of two sequential steps, AdoMet formation and the subsequent tripolyphosphate hydrolysis which occurs prior to release of AdoMet from the enzyme. This Bordetella petrii (strain ATCC BAA-461 / DSM 12804 / CCUG 43448) protein is S-adenosylmethionine synthase.